Consider the following 153-residue polypeptide: 6,7-dimethyl-8-ribityllumazine synthase (153 aa).

Residues Phe21, Ala55–Glu57, and Thr79–Ile81 each bind 5-amino-6-(D-ribitylamino)uracil. Position 84 to 85 (Ala84 to Thr85) interacts with (2S)-2-hydroxy-3-oxobutyl phosphate. The Proton donor role is filled by His87. Phe112 contributes to the 5-amino-6-(D-ribitylamino)uracil binding site. (2S)-2-hydroxy-3-oxobutyl phosphate is bound at residue Arg126.

It belongs to the DMRL synthase family. In terms of assembly, forms an icosahedral capsid composed of 60 subunits, arranged as a dodecamer of pentamers.

It carries out the reaction (2S)-2-hydroxy-3-oxobutyl phosphate + 5-amino-6-(D-ribitylamino)uracil = 6,7-dimethyl-8-(1-D-ribityl)lumazine + phosphate + 2 H2O + H(+). It participates in cofactor biosynthesis; riboflavin biosynthesis; riboflavin from 2-hydroxy-3-oxobutyl phosphate and 5-amino-6-(D-ribitylamino)uracil: step 1/2. Its function is as follows. Catalyzes the formation of 6,7-dimethyl-8-ribityllumazine by condensation of 5-amino-6-(D-ribitylamino)uracil with 3,4-dihydroxy-2-butanone 4-phosphate. This is the penultimate step in the biosynthesis of riboflavin. In Bacillus cereus (strain G9842), this protein is 6,7-dimethyl-8-ribityllumazine synthase.